The primary structure comprises 449 residues: Glucose-6-phosphate isomerase (449 aa).

Glu291 acts as the Proton donor in catalysis. Catalysis depends on residues His312 and Lys426.

The protein belongs to the GPI family.

Its subcellular location is the cytoplasm. It catalyses the reaction alpha-D-glucose 6-phosphate = beta-D-fructose 6-phosphate. Its pathway is carbohydrate biosynthesis; gluconeogenesis. It functions in the pathway carbohydrate degradation; glycolysis; D-glyceraldehyde 3-phosphate and glycerone phosphate from D-glucose: step 2/4. Functionally, catalyzes the reversible isomerization of glucose-6-phosphate to fructose-6-phosphate. This is Glucose-6-phosphate isomerase from Streptococcus pyogenes serotype M49 (strain NZ131).